A 657-amino-acid chain; its full sequence is Leishmanolysin (657 aa).

The N-terminal stretch at 1-41 is a signal peptide; it reads MSVDSSSSSTHRRRCVAARLVRLAAAGAAVTVAVGTAAAWA. Positions 42–102 are cleaved as a propeptide — activation peptide; sequence HAGALQHRCI…DPRPGSAPTV (61 aa). Residues 44–611 are Extracellular-facing; it reads GALQHRCIHD…DRMVGLATAA (568 aa). An N-linked (GlcNAc...) asparagine glycan is attached at Asn107. 2 cysteine pairs are disulfide-bonded: Cys127–Cys144 and Cys193–Cys232. His266 contacts Zn(2+). Glu267 is a catalytic residue. Position 270 (His270) interacts with Zn(2+). The N-linked (GlcNAc...) asparagine glycan is linked to Asn302. Cystine bridges form between Cys316/Cys388, Cys395/Cys458, Cys408/Cys427, Cys417/Cys492, Cys469/Cys513, Cys518/Cys568, and Cys538/Cys561. Zn(2+) is bound at residue His336. N-linked (GlcNAc...) asparagine glycans are attached at residues Asn399, Asn409, Asn445, Asn466, and Asn501. Residues 612 to 632 traverse the membrane as a helical segment; the sequence is TVLLGMVLSLMALVVVWLLLV. Residues 633–657 are Cytoplasmic-facing; it reads SCPWWCCKLGGPPASVTPACSPETE.

Belongs to the peptidase M8 family. Zn(2+) is required as a cofactor.

It is found in the membrane. It catalyses the reaction Preference for hydrophobic residues at P1 and P1' and basic residues at P2' and P3'. A model nonapeptide is cleaved at -Ala-Tyr-|-Leu-Lys-Lys-.. In terms of biological role, has an integral role during the infection of macrophages in the mammalian host. The sequence is that of Leishmanolysin (mspC) from Leishmania tropica.